A 116-amino-acid chain; its full sequence is Methionine-R-sulfoxide reductase B1 (116 aa).

Residues 1-106 form the MsrB domain; sequence MSFCSFFGGE…FSSSLKFIPK (106 aa). C23, C26, C71, and C74 together coordinate Zn(2+). U95 (nucleophile) is an active-site residue. Residue U95 is a non-standard amino acid, selenocysteine.

The protein belongs to the MsrB Met sulfoxide reductase family. Zn(2+) serves as cofactor. Truncated MSRB1/SEPX1 proteins produced by failed UGA/Sec decoding are ubiquitinated by the CRL2(FEM1C) E3 ubiquitin-protein ligase complex.

Its subcellular location is the cytoplasm. It is found in the nucleus. It localises to the cytoskeleton. The catalysed reaction is L-methionyl-[protein] + [thioredoxin]-disulfide + H2O = L-methionyl-(R)-S-oxide-[protein] + [thioredoxin]-dithiol. It catalyses the reaction [thioredoxin]-disulfide + L-methionine + H2O = L-methionine (R)-S-oxide + [thioredoxin]-dithiol. Its function is as follows. Methionine-sulfoxide reductase that specifically reduces methionine (R)-sulfoxide back to methionine. While in many cases, methionine oxidation is the result of random oxidation following oxidative stress, methionine oxidation is also a post-translational modification that takes place on specific residue. Acts as a regulator of actin assembly by reducing methionine (R)-sulfoxide mediated by MICALs (MICAL1, MICAL2 or MICAL3) on actin, thereby promoting filament repolymerization. Plays a role in innate immunity by reducing oxidized actin, leading to actin repolymerization in macrophages. This Bos taurus (Bovine) protein is Methionine-R-sulfoxide reductase B1 (MSRB1).